The primary structure comprises 125 residues: Histone H2A (125 aa).

The span at Met1–Ser18 shows a compositional bias: basic residues. Positions Met1–Leu23 are disordered. N-acetylserine is present on Ser2. At Gln104 the chain carries N5-methylglutamine.

The protein belongs to the histone H2A family. The nucleosome is a histone octamer containing two molecules each of H2A, H2B, H3 and H4 assembled in one H3-H4 heterotetramer and two H2A-H2B heterodimers. The octamer wraps approximately 147 bp of DNA.

The protein localises to the nucleus. It is found in the chromosome. Its function is as follows. Core component of nucleosome. Nucleosomes wrap and compact DNA into chromatin, limiting DNA accessibility to the cellular machineries which require DNA as a template. Histones thereby play a central role in transcription regulation, DNA repair, DNA replication and chromosomal stability. DNA accessibility is regulated via a complex set of post-translational modifications of histones, also called histone code, and nucleosome remodeling. The sequence is that of Histone H2A from Sepia officinalis (Common cuttlefish).